The following is a 585-amino-acid chain: Tyramine beta-hydroxylase (585 aa).

The signal sequence occupies residues 1–21 (MKCANAAALLFFVLCDIGVHG). The region spanning 31 to 142 (SNVTVKWQTD…GTTQFYIAAS (112 aa)) is the DOMON domain. N-linked (GlcNAc...) asparagine glycans are attached at residues Asn32 and Asn71. The active site involves Tyr206. Disulfide bonds link Cys208-Cys258 and Cys247-Cys270. His240 and His241 together coordinate Cu(2+). The Cu(2+) site is built by His308, His386, and His388. Disulfide bonds link Cys365-Cys477, Cys369-Cys534, and Cys440-Cys462. His386 is an active-site residue. N-linked (GlcNAc...) asparagine glycosylation occurs at Asn449. Met461 is a Cu(2+) binding site. Asn483 carries an N-linked (GlcNAc...) asparagine glycan.

The protein belongs to the copper type II ascorbate-dependent monooxygenase family. It depends on Cu(2+) as a cofactor.

The protein resides in the cytoplasmic vesicle. Its subcellular location is the secretory vesicle. It localises to the synaptic vesicle. The enzyme catalyses tyramine + L-ascorbate + O2 = (R)-octopamine + L-dehydroascorbate + H2O. Its function is as follows. Catalyzes the hydroxylation of tyramine into octopamine, a neurotransmitter involved in pharyngeal pumping and egg laying. The chain is Tyramine beta-hydroxylase (tbh-1) from Caenorhabditis briggsae.